Here is a 524-residue protein sequence, read N- to C-terminus: GMP synthase [glutamine-hydrolyzing] (524 aa).

Residues 9 to 207 enclose the Glutamine amidotransferase type-1 domain; it reads RILILDFGSQ…VIHICQCIPN (199 aa). Cys86 functions as the Nucleophile in the catalytic mechanism. Active-site residues include His181 and Glu183. The GMPS ATP-PPase domain occupies 208 to 399; it reads WTTKHIIEDS…LGLPADLIYR (192 aa). 235 to 241 provides a ligand contact to ATP; the sequence is SGGVDSA.

In terms of assembly, homodimer.

The enzyme catalyses XMP + L-glutamine + ATP + H2O = GMP + L-glutamate + AMP + diphosphate + 2 H(+). It participates in purine metabolism; GMP biosynthesis; GMP from XMP (L-Gln route): step 1/1. Functionally, catalyzes the synthesis of GMP from XMP. The chain is GMP synthase [glutamine-hydrolyzing] from Coxiella burnetii (strain RSA 331 / Henzerling II).